The following is a 726-amino-acid chain: Probable dipeptidyl-peptidase 5 (726 aa).

Positions 1-19 are cleaved as a signal peptide; the sequence is MAAAKWLIASLAFASSGLA. Asparagine 96 and asparagine 252 each carry an N-linked (GlcNAc...) asparagine glycan. Residues 269–291 form a disordered region; sequence AEPINKRNGPRTPQGIEGASSSP. Serine 558 acts as the Charge relay system in catalysis. An N-linked (GlcNAc...) asparagine glycan is attached at asparagine 605. Active-site charge relay system residues include aspartate 641 and histidine 673. Asparagine 699 carries N-linked (GlcNAc...) asparagine glycosylation.

Belongs to the peptidase S9C family.

Its subcellular location is the secreted. Extracellular dipeptidyl-peptidase which removes N-terminal dipeptides sequentially from polypeptides having unsubstituted N-termini. Contributes to pathogenicity. This is Probable dipeptidyl-peptidase 5 (DPP5) from Trichophyton verrucosum (strain HKI 0517).